The primary structure comprises 254 residues: 5'-nucleotidase SurE (254 aa).

A divalent metal cation contacts are provided by Asp-8, Asp-9, Ser-38, and Asn-91.

The protein belongs to the SurE nucleotidase family. The cofactor is a divalent metal cation.

The protein resides in the cytoplasm. It carries out the reaction a ribonucleoside 5'-phosphate + H2O = a ribonucleoside + phosphate. In terms of biological role, nucleotidase that shows phosphatase activity on nucleoside 5'-monophosphates. This chain is 5'-nucleotidase SurE, found in Anaeromyxobacter sp. (strain K).